Reading from the N-terminus, the 841-residue chain is Envelope glycoprotein H (841 aa).

A signal peptide spans 1–17; sequence MFALVLAVVILPLWTTA. N-linked (GlcNAc...) asparagine; by host glycosylation is found at N18, N45, and N217. The Virion surface segment spans residues 18–802; sequence NKSYVTPTPA…ERRQAIRMSG (785 aa). Residues 246-309 are interaction with gL; the sequence is DSGRVEVNIG…DPGPSYRVYL (64 aa). 5 N-linked (GlcNAc...) asparagine; by host glycosylation sites follow: N317, N499, N522, N760, and N783. Residues 803 to 823 form a helical membrane-spanning segment; it reads QYLGASLGGAFLAVVGFGIIG. At 824–841 the chain is on the intravirion side; the sequence is WMLCGNSRLREYNKIPLT.

Belongs to the herpesviridae glycoprotein H family. As to quaternary structure, interacts with glycoprotein L (gL); this interaction is necessary for the correct processing and cell surface expression of gH. The heterodimer gH/gL seems to interact with gB trimers during fusion. In terms of processing, N-glycosylated, O-glycosylated, and sialylated.

The protein localises to the virion membrane. The protein resides in the host cell membrane. It is found in the host endosome membrane. Its function is as follows. The heterodimer glycoprotein H-glycoprotein L is required for the fusion of viral and plasma membranes leading to virus entry into the host cell. Following initial binding to host receptor, membrane fusion is mediated by the fusion machinery composed of gB and the heterodimer gH/gL. May also be involved in the fusion between the virion envelope and the outer nuclear membrane during virion morphogenesis. This Varicella-zoster virus (strain Dumas) (HHV-3) protein is Envelope glycoprotein H.